The following is a 336-amino-acid chain: Ornithine carbamoyltransferase, catabolic (336 aa).

Residues 57–60 (STRT), glutamine 84, arginine 108, and 136–139 (HPTQ) contribute to the carbamoyl phosphate site. L-ornithine contacts are provided by residues asparagine 169, aspartate 233, and 237 to 238 (SM). Carbamoyl phosphate is bound by residues 275–276 (CL) and arginine 322.

It belongs to the aspartate/ornithine carbamoyltransferase superfamily. OTCase family.

It is found in the cytoplasm. It carries out the reaction carbamoyl phosphate + L-ornithine = L-citrulline + phosphate + H(+). Its pathway is amino-acid degradation; L-arginine degradation via ADI pathway; carbamoyl phosphate from L-arginine: step 2/2. Reversibly catalyzes the transfer of the carbamoyl group from carbamoyl phosphate (CP) to the N(epsilon) atom of ornithine (ORN) to produce L-citrulline. This is Ornithine carbamoyltransferase, catabolic from Chromobacterium violaceum (strain ATCC 12472 / DSM 30191 / JCM 1249 / CCUG 213 / NBRC 12614 / NCIMB 9131 / NCTC 9757 / MK).